The sequence spans 193 residues: Holliday junction branch migration complex subunit RuvA (193 aa).

The tract at residues 1 to 63 (MIHHLKGQLI…EDSHTLYGFA (63 aa)) is domain I. Residues 64-142 (EKSEREIFRL…KVLGDDEVFV (79 aa)) are domain II. The tract at residues 143-145 (SQS) is flexible linker. A domain III region spans residues 145-193 (SNTNKEEALSALEILGYNRRQAGKVVEKILKEDPESTVESIIKMALKKL).

This sequence belongs to the RuvA family. As to quaternary structure, homotetramer. Forms an RuvA(8)-RuvB(12)-Holliday junction (HJ) complex. HJ DNA is sandwiched between 2 RuvA tetramers; dsDNA enters through RuvA and exits via RuvB. An RuvB hexamer assembles on each DNA strand where it exits the tetramer. Each RuvB hexamer is contacted by two RuvA subunits (via domain III) on 2 adjacent RuvB subunits; this complex drives branch migration. In the full resolvosome a probable DNA-RuvA(4)-RuvB(12)-RuvC(2) complex forms which resolves the HJ.

It localises to the cytoplasm. Its function is as follows. The RuvA-RuvB-RuvC complex processes Holliday junction (HJ) DNA during genetic recombination and DNA repair, while the RuvA-RuvB complex plays an important role in the rescue of blocked DNA replication forks via replication fork reversal (RFR). RuvA specifically binds to HJ cruciform DNA, conferring on it an open structure. The RuvB hexamer acts as an ATP-dependent pump, pulling dsDNA into and through the RuvAB complex. HJ branch migration allows RuvC to scan DNA until it finds its consensus sequence, where it cleaves and resolves the cruciform DNA. In Christiangramia forsetii (strain DSM 17595 / CGMCC 1.15422 / KT0803) (Gramella forsetii), this protein is Holliday junction branch migration complex subunit RuvA.